Consider the following 231-residue polypeptide: Aquaporin Z (231 aa).

2 helical membrane-spanning segments follow: residues 9-29 (CFGT…AAGF) and 34-54 (IGFA…AFAV). An NPA 1 motif is present at residues 63–65 (NPA). 3 helical membrane passes run 82-102 (VGYV…LYLI), 129-149 (YSML…LLVI), and 156-176 (FAPA…IHLI). Positions 186 to 188 (NPA) match the NPA 2 motif. The chain crosses the membrane as a helical span at residues 202–222 (LEQLWFFWVVPIVGGIIGGLI).

This sequence belongs to the MIP/aquaporin (TC 1.A.8) family. As to quaternary structure, homotetramer.

It localises to the cell inner membrane. It catalyses the reaction H2O(in) = H2O(out). Channel that permits osmotically driven movement of water in both directions. It is involved in the osmoregulation and in the maintenance of cell turgor during volume expansion in rapidly growing cells. It mediates rapid entry or exit of water in response to abrupt changes in osmolarity. This Escherichia coli O6:H1 (strain CFT073 / ATCC 700928 / UPEC) protein is Aquaporin Z.